A 1194-amino-acid polypeptide reads, in one-letter code: Pre-mRNA-processing ATP-dependent RNA helicase prp-5 (1194 aa).

Disordered stretches follow at residues Met-1–Lys-201, Ala-224–Ala-248, and Ala-452–Gly-484. Basic and acidic residues-rich tracts occupy residues Arg-21–Asp-37 and Ser-44–Pro-154. Positions Pro-156 to Thr-176 are enriched in polar residues. Positions Glu-177–Arg-186 are enriched in basic and acidic residues. Positions Ser-232 to Ala-248 are enriched in low complexity. Residues Glu-455–Asn-469 are compositionally biased toward basic and acidic residues. The Q motif motif lies at Gln-561 to Met-589. One can recognise a Helicase ATP-binding domain in the interval Leu-592–Ile-770. Ala-605–Thr-612 contributes to the ATP binding site. The short motif at Asp-718 to Asp-721 is the DEAD box element. A Helicase C-terminal domain is found at Arg-797 to Arg-945. Disordered stretches follow at residues Val-952–Lys-1011 and Asp-1025–Ala-1056. Basic and acidic residues-rich tracts occupy residues Gly-967 to Met-980, Glu-997 to Lys-1011, and Asp-1025 to Ala-1036.

This sequence belongs to the DEAD box helicase family. DDX46/PRP5 subfamily.

Its subcellular location is the nucleus. The catalysed reaction is ATP + H2O = ADP + phosphate + H(+). Its function is as follows. ATP-dependent RNA helicase involved spliceosome assembly and in nuclear splicing. Catalyzes an ATP-dependent conformational change of U2 snRNP. Bridges U1 and U2 snRNPs and enables stable U2 snRNP association with intron RNA. This is Pre-mRNA-processing ATP-dependent RNA helicase prp-5 (prp-5) from Neurospora crassa (strain ATCC 24698 / 74-OR23-1A / CBS 708.71 / DSM 1257 / FGSC 987).